The chain runs to 221 residues: Chalcone--flavanone isomerase (221 aa).

Substrate is bound by residues threonine 50, asparagine 115, and threonine 192.

The protein belongs to the chalcone isomerase family.

It catalyses the reaction a chalcone = a flavanone.. It functions in the pathway secondary metabolite biosynthesis; flavonoid biosynthesis. Its function is as follows. Catalyzes the intramolecular cyclization of bicyclic chalcones into tricyclic (S)-flavanones. Responsible for the isomerization of 4,2',4',6'-tetrahydroxychalcone (also termed chalcone) into naringenin. This Phaseolus vulgaris (Kidney bean) protein is Chalcone--flavanone isomerase (CHI).